The following is a 554-amino-acid chain: Arginine--tRNA ligase (554 aa).

The 'HIGH' region motif lies at 129–139 (ANPTGPLHIGH).

The protein belongs to the class-I aminoacyl-tRNA synthetase family. Monomer.

It is found in the cytoplasm. It carries out the reaction tRNA(Arg) + L-arginine + ATP = L-arginyl-tRNA(Arg) + AMP + diphosphate. This Citrifermentans bemidjiense (strain ATCC BAA-1014 / DSM 16622 / JCM 12645 / Bem) (Geobacter bemidjiensis) protein is Arginine--tRNA ligase.